The following is a 145-amino-acid chain: Large ribosomal subunit protein uL13 (145 aa).

This sequence belongs to the universal ribosomal protein uL13 family. In terms of assembly, part of the 50S ribosomal subunit.

Its function is as follows. This protein is one of the early assembly proteins of the 50S ribosomal subunit, although it is not seen to bind rRNA by itself. It is important during the early stages of 50S assembly. This Bacillus velezensis (strain DSM 23117 / BGSC 10A6 / LMG 26770 / FZB42) (Bacillus amyloliquefaciens subsp. plantarum) protein is Large ribosomal subunit protein uL13.